Reading from the N-terminus, the 53-residue chain is UPF0391 membrane protein Patl_1732 (53 aa).

2 helical membrane passes run 4–24 and 28–48; these read WAVIFLVIALVAAVLGFGGIA and AGIAKIIFFVFLVLLVISVVM.

The protein belongs to the UPF0391 family.

It is found in the cell membrane. This is UPF0391 membrane protein Patl_1732 from Pseudoalteromonas atlantica (strain T6c / ATCC BAA-1087).